The following is a 306-amino-acid chain: Ribonuclease Z (306 aa).

The Zn(2+) site is built by His-63, His-65, Asp-67, His-68, His-141, Asp-211, and His-269. Catalysis depends on Asp-67, which acts as the Proton acceptor.

Belongs to the RNase Z family. As to quaternary structure, homodimer. It depends on Zn(2+) as a cofactor.

The enzyme catalyses Endonucleolytic cleavage of RNA, removing extra 3' nucleotides from tRNA precursor, generating 3' termini of tRNAs. A 3'-hydroxy group is left at the tRNA terminus and a 5'-phosphoryl group is left at the trailer molecule.. Its function is as follows. Zinc phosphodiesterase, which displays some tRNA 3'-processing endonuclease activity. Probably involved in tRNA maturation, by removing a 3'-trailer from precursor tRNA. The chain is Ribonuclease Z from Staphylococcus epidermidis (strain ATCC 12228 / FDA PCI 1200).